Consider the following 80-residue polypeptide: Defensin coprisin (80 aa).

Positions M1–C20 are cleaved as a signal peptide. The propeptide occupies N21–R37. 3 disulfides stabilise this stretch: C40–C71, C57–C76, and C61–C78.

The protein belongs to the invertebrate defensin family. Type 1 subfamily.

It localises to the secreted. The protein resides in the target cell membrane. Its function is as follows. Potent broad-spectrum antibacterial peptide against both Gram-positive (B.subtilis, S.epidermidis, and S.aureus) and Gram-negative bacteria (E.coli, S.typhimurium, and P.aeruginosa). Is also active against all antibiotic-resistant bacterial strains tested. Induces apoptosis in C.albicans, but does not disrupt the fungal plasma membrane at all. Acts by permeabilizing the bacterial cell membrane, but not human membranes. Also shows potent anti-inflammatory activities, since it reduces both LPS-induced nitric oxide release and pro-inflammatory cytokine production. Anti-inflammatory activities are initiated by suppressing the binding of LPS to toll-like receptor 4 (TLR4), and subsequently inhibiting the phosphorylation of p38 mitogen-activated protein kinase (MAPK) and nuclear translocation of NF-kB (TNFRSF11A). Does not show hemolytic activity against human erythrocytes. This is Defensin coprisin from Copris tripartitus (Dung beetle).